Reading from the N-terminus, the 1525-residue chain is Multidrug resistance-associated protein 1 (1525 aa).

Residues 1–33 (MGIESLCSADASEPFWDWNLTWHTENPDFTQCF) are Extracellular-facing. A helical transmembrane segment spans residues 34–54 (QNTVLVWVPCIYLWVCFPAYF). The Cytoplasmic segment spans residues 55–74 (LYLRSHDRGYIQMSILNKAK). The chain crosses the membrane as a helical span at residues 75 to 95 (TALGLILWIVCWADLFYSFWE). At 96 to 100 (RSQNI) the chain is on the extracellular side. The chain crosses the membrane as a helical span at residues 101 to 121 (FRAPFFLISPTVLGITMLLAT). The Cytoplasmic portion of the chain corresponds to 122 to 133 (FLIQHERLKGVQ). Residues 134-154 (SSGVMMIFWLISLLCATVIFR) form a helical membrane-spanning segment. Residues 155–172 (SKIMLALNTDTEVDAFRY) are Extracellular-facing. Residues 173-193 (VTFCTYFILLLVQLILSCFPE) form a helical membrane-spanning segment. Over 194–315 (KPPLFSEAVN…RSSEASLSKV (122 aa)) the chain is Cytoplasmic. Residues 316 to 336 (LYKTFGPYFLMSFLFKAAHDL) form a helical membrane-spanning segment. The ABC transmembrane type-1 1 domain maps to 324-607 (FLMSFLFKAA…LPMVISSIVE (284 aa)). At 337–362 (LMFTGPEILKLLINFVNNKSAPNWQG) the chain is on the extracellular side. Residues 363–383 (YFYTGLLFVCACLQTLILHQY) form a helical membrane-spanning segment. The Cytoplasmic segment spans residues 384–439 (FHICFVTGMRLKTAIVGVIYRKALVITNSARKTSTVGEIVNLMSVDAQRFMDLATY). A helical membrane pass occupies residues 440–460 (INMIWSAPLQVILALYLLWRN). Topologically, residues 461 to 463 (LGP) are extracellular. The helical transmembrane segment at 464–484 (SVLAGVAVMILLVPINAVMAM) threads the bilayer. At 485-546 (KTKTYQVAQM…VLKKSAYLAA (62 aa)) the chain is on the cytoplasmic side. Residues 547 to 567 (MGTFTWVCAPFLVALSTFAVY) traverse the membrane as a helical segment. The Extracellular portion of the chain corresponds to 568-589 (VKVNKNNILDAQKAFVSLALFN). A helical transmembrane segment spans residues 590-610 (ILRFPLNILPMVISSIVEASV). The Cytoplasmic segment spans residues 611–961 (SLKRLRVFLS…VKATVYWEYM (351 aa)). Residues 641–865 (IVVKNATFSW…DGAFAEFLRT (225 aa)) enclose the ABC transporter 1 domain. 675–682 (GQVGCGKS) provides a ligand contact to ATP. Composition is skewed to polar residues over residues 871-882 (QSMESSDASSPS) and 908-928 (SNSS…STAE). Disordered stretches follow at residues 871 to 891 (QSME…PVEN) and 908 to 930 (SNSS…AELQ). A helical transmembrane segment spans residues 962 to 982 (KAIGLYISFLSVFLFMCNHIA). The ABC transmembrane type-1 2 domain maps to 969–1250 (SFLSVFLFMC…LVRMTSDLET (282 aa)). At 983–1019 (SLASNYWLSLWTDDPVVNGTQQYTNVRLGVYGALGIS) the chain is on the extracellular side. A helical transmembrane segment spans residues 1020 to 1040 (QGIAVFGYSMAVSIGGIFASR). At 1041 to 1083 (HLHLDLLHNVLRSPMSFFERTPSGNLVSRFSKEIDTIDSTIPP) the chain is on the cytoplasmic side. Residues 1084 to 1104 (IIKMFMGSTFNVIGACIIILL) traverse the membrane as a helical segment. Position 1105 (Ala-1105) is a topological domain, extracellular. The chain crosses the membrane as a helical span at residues 1106-1126 (TPIAAVVIPPLGLVYLLVQRF). Residues 1127–1197 (YVATSRQLKR…VANRWLAVRL (71 aa)) lie on the Cytoplasmic side of the membrane. The chain crosses the membrane as a helical span at residues 1198 to 1218 (EFVGNCIVLFAALFAVIARNK). The Extracellular segment spans residues 1219 to 1220 (LS). The helical transmembrane segment at 1221 to 1241 (PGLIGLSVSYSLQITAYLNWL) threads the bilayer. Over 1242–1525 (VRMTSDLETN…YSMAKDSGLA (284 aa)) the chain is Cytoplasmic. The 233-residue stretch at 1289–1521 (FRGFGLRYRE…KGLFYSMAKD (233 aa)) folds into the ABC transporter 2 domain. 1321-1328 (GRTGAGKS) lines the ATP pocket.

The protein belongs to the ABC transporter superfamily. ABCC family. Conjugate transporter (TC 3.A.1.208) subfamily.

The protein resides in the cell membrane. The catalysed reaction is ATP + H2O + xenobioticSide 1 = ADP + phosphate + xenobioticSide 2.. It carries out the reaction an S-substituted glutathione(in) + ATP + H2O = an S-substituted glutathione(out) + ADP + phosphate + H(+). The enzyme catalyses sphing-4-enine 1-phosphate(in) + ATP + H2O = sphing-4-enine 1-phosphate(out) + ADP + phosphate + H(+). It catalyses the reaction leukotriene C4(in) + ATP + H2O = leukotriene C4(out) + ADP + phosphate + H(+). The catalysed reaction is 17beta-estradiol 17-O-(beta-D-glucuronate)(in) + ATP + H2O = 17beta-estradiol 17-O-(beta-D-glucuronate)(out) + ADP + phosphate + H(+). It carries out the reaction 2',3'-cGAMP(in) + ATP + H2O = 2',3'-cGAMP(out) + ADP + phosphate + H(+). In terms of biological role, mediates export of organic anions and drugs from the cytoplasm. Mediates ATP-dependent transport of glutathione and glutathione conjugates, leukotriene C4, estradiol-17-beta-o-glucuronide and other xenobiotics. Hydrolyzes ATP with low efficiency. Mediates ATP-dependent, GSH-independent cyclic GMP-AMP (cGAMP) export. Thus, by limiting intracellular cGAMP concentrations negatively regulates the cGAS-STING pathway. The protein is Multidrug resistance-associated protein 1 of Gallus gallus (Chicken).